Here is a 235-residue protein sequence, read N- to C-terminus: Thymidylate kinase (235 aa).

10–17 (GINGVEKS) serves as a coordination point for ATP.

The protein belongs to the thymidylate kinase family.

It carries out the reaction dTMP + ATP = dTDP + ADP. The protein operates within pyrimidine metabolism; dTTP biosynthesis. Functionally, catalyzes the conversion of dTMP to dTDP. The sequence is that of Thymidylate kinase (TMK) from African swine fever virus (isolate Pig/Kenya/KEN-50/1950) (ASFV).